The primary structure comprises 586 residues: Phosphomethylpyrimidine synthase (586 aa).

The segment at 1 to 33 (MKQSVSAEQIELKSSLPGSKKVYVDGPREGMKV) is disordered. Residues 22–33 (VYVDGPREGMKV) are compositionally biased toward basic and acidic residues. Residues Asn193, Met222, Tyr251, His287, 307-309 (SRG), 348-351 (DGLR), and Glu387 each bind substrate. Residue His391 coordinates Zn(2+). Residue Tyr414 participates in substrate binding. His455 contributes to the Zn(2+) binding site. Cys535, Cys538, and Cys543 together coordinate [4Fe-4S] cluster.

It belongs to the ThiC family. The cofactor is [4Fe-4S] cluster.

It catalyses the reaction 5-amino-1-(5-phospho-beta-D-ribosyl)imidazole + S-adenosyl-L-methionine = 4-amino-2-methyl-5-(phosphooxymethyl)pyrimidine + CO + 5'-deoxyadenosine + formate + L-methionine + 3 H(+). It functions in the pathway cofactor biosynthesis; thiamine diphosphate biosynthesis. Its function is as follows. Catalyzes the synthesis of the hydroxymethylpyrimidine phosphate (HMP-P) moiety of thiamine from aminoimidazole ribotide (AIR) in a radical S-adenosyl-L-methionine (SAM)-dependent reaction. This Bacillus cereus (strain G9842) protein is Phosphomethylpyrimidine synthase.